Here is a 324-residue protein sequence, read N- to C-terminus: Holliday junction branch migration complex subunit RuvB (324 aa).

The large ATPase domain (RuvB-L) stretch occupies residues 1–168 (MEDLALRPKT…FGIVEHLEYY (168 aa)). ATP-binding residues include Y14, I15, G48, K51, T52, T53, D97, T146, Y168, and R205. Residue T52 participates in Mg(2+) binding. The segment at 169 to 239 (TPEELAQGVM…RALEALAALG (71 aa)) is small ATPAse domain (RuvB-S). The tract at residues 242-324 (ELGLEKRDRE…PPPVGPLLEP (83 aa)) is head domain (RuvB-H). DNA-binding residues include R297 and R302.

The protein belongs to the RuvB family. Homohexamer. Forms a complex with RuvA. Electron microscopic images suggest 2 closely interacting RuvA tetramers sandwich the HJ DNA; each tetramer associates with an RuvB hexamer. Forms 2 complexes with Holliday junction (HJ) DNA which probably have 1 and 2 RuvA tetramers per complex (called complex I and complex II). Forms an RuvA(8)-RuvB(12)-Holliday junction (HJ) complex. HJ DNA is sandwiched between 2 RuvA tetramers; dsDNA enters through RuvA and exits via RuvB. An RuvB hexamer assembles on each DNA strand where it exits the tetramer. Each RuvB hexamer is contacted by two RuvA subunits (via domain III) on 2 adjacent RuvB subunits; this complex drives branch migration. In the full resolvosome a probable DNA-RuvA(4)-RuvB(12)-RuvC(2) complex forms which resolves the HJ. It depends on Mg(2+) as a cofactor.

Its subcellular location is the cytoplasm. It carries out the reaction ATP + H2O = ADP + phosphate + H(+). Its activity is regulated as follows. The activity of RuvB is enhanced by E.coli RuvA. Its function is as follows. The RuvA-RuvB-RuvC complex processes Holliday junction (HJ) DNA during genetic recombination and DNA repair, while the RuvA-RuvB complex plays an important role in the rescue of blocked DNA replication forks via replication fork reversal (RFR). RuvA specifically binds to HJ cruciform DNA, conferring on it an open structure. The RuvB hexamer acts as an ATP-dependent pump, pulling dsDNA into and through the RuvAB complex. RuvB forms 2 homohexamers on either side of HJ DNA bound by 1 or 2 RuvA tetramers; 4 subunits per hexamer contact DNA at a time. Coordinated motions by a converter formed by DNA-disengaged RuvB subunits stimulates ATP hydrolysis and nucleotide exchange. Immobilization of the converter enables RuvB to convert the ATP-contained energy into a lever motion, pulling 2 nucleotides of DNA out of the RuvA tetramer per ATP hydrolyzed, thus driving DNA branch migration. The RuvB motors rotate together with the DNA substrate, which together with the progressing nucleotide cycle form the mechanistic basis for DNA recombination by continuous HJ branch migration. Branch migration allows RuvC to scan DNA until it finds its consensus sequence, where it cleaves and resolves cruciform DNA. In terms of biological role, ruvB is a Mg(2+)-dependent, DNA-dependent ATPase with an equal preference for supercoiled and linear dsDNA; all (d)NTPs tested were efficiently hydrolyzed. Promotes Holliday junction (HJ) dissociation at 60 degrees Celsius in the presence of ATP but not ATP-gamma-S or ADP; (d)ATP, (d)CTP and dTTP also power dissociation in the absence of any RuvA. RuvA stimulates the ATPase of RuvB in the presence of dsDNA and HJ branch migration by RuvB. Excess RuvB stimulates some branch migration in vitro even in the presence of mutant RuvA. This is Holliday junction branch migration complex subunit RuvB from Thermus thermophilus (strain ATCC 27634 / DSM 579 / HB8).